We begin with the raw amino-acid sequence, 238 residues long: ATP-dependent dethiobiotin synthetase BioD (238 aa).

12 to 17 (EVGKTV) lines the ATP pocket. A Mg(2+)-binding site is contributed by T16. K37 is an active-site residue. T41 contacts substrate. ATP contacts are provided by residues D50, 109-112 (EGAG), 170-171 (GS), and 200-202 (PAG). Positions 50 and 109 each coordinate Mg(2+).

It belongs to the dethiobiotin synthetase family. In terms of assembly, homodimer. Mg(2+) is required as a cofactor.

Its subcellular location is the cytoplasm. The catalysed reaction is (7R,8S)-7,8-diammoniononanoate + CO2 + ATP = (4R,5S)-dethiobiotin + ADP + phosphate + 3 H(+). The protein operates within cofactor biosynthesis; biotin biosynthesis; biotin from 7,8-diaminononanoate: step 1/2. In terms of biological role, catalyzes a mechanistically unusual reaction, the ATP-dependent insertion of CO2 between the N7 and N8 nitrogen atoms of 7,8-diaminopelargonic acid (DAPA, also called 7,8-diammoniononanoate) to form a ureido ring. This chain is ATP-dependent dethiobiotin synthetase BioD, found in Parafrankia sp. (strain EAN1pec).